The following is a 59-amino-acid chain: Conorfamide-Vc1 (59 aa).

Positions 1–19 (MSGRGFLLLALLLLVTVEA) are cleaved as a signal peptide. Positions 20-25 (TKVEKK) are excised as a propeptide. The positively charged region crucial for activity against MRGPRX1 receptors stretch occupies residues 32 to 39 (AWSGPRNR). Phe43 is modified (phenylalanine amide). Positions 45 to 59 (RRDMQSPLLSERLRL) are excised as a propeptide.

The protein belongs to the FARP (FMRFamide related peptide) family. Expressed by the venom duct.

It is found in the secreted. Functionally, this peptide activates human and mouse sensory neuron-specific G-protein coupled receptors MRGPRX1. The activity on human receptors has been measured (EC(50)=1.8 uM). Compared with the agonist chloroquine (anti-malaria drug), it is 200-fold more potent. The peptide also causes an increase in cytosolic calcium in a specific subset of DRG neurons, and, in contrast to other Conus venom peptides, the peptide also affects a large fraction of the non-neuronal cells. In vivo, when intracranially injected into mice, it principally renders mice unable to move, and at very low doses, it causes hyperactivity. It also induces itch sensation, since intradermal cheek injection into humanized transgenic mouse (mouse MRGPRX1 replaced by human MRGPRX1) induces scratching. In vivo, when tested at high doses (10 uM) on zebrafish larvae, it induces a range of behavioral effects ranging from an early hypoactivity during the first hour of treatment to an increase in movement during the following hours when the larvae are submitted to strobe light phases. The polypeptide is Conorfamide-Vc1 (Conus victoriae (Queen Victoria cone)).